The following is a 303-amino-acid chain: 1-acyl-sn-glycerol-3-phosphate acyltransferase (303 aa).

Residues 82–87 carry the HXXXXD motif motif; that stretch reads HQSTLD. The interval 278–303 is disordered; sequence NEPVPSVSISNDVNTHNEGSSVKKMH. Polar residues predominate over residues 284–297; it reads VSISNDVNTHNEGS.

This sequence belongs to the 1-acyl-sn-glycerol-3-phosphate acyltransferase family.

Its subcellular location is the lipid droplet. It carries out the reaction a 1-acyl-sn-glycero-3-phosphate + an acyl-CoA = a 1,2-diacyl-sn-glycero-3-phosphate + CoA. It catalyses the reaction a 1-acyl-sn-glycero-3-phosphocholine + an acyl-CoA = a 1,2-diacyl-sn-glycero-3-phosphocholine + CoA. The catalysed reaction is a 1-acyl-sn-glycero-3-phosphoethanolamine + an acyl-CoA = a 1,2-diacyl-sn-glycero-3-phosphoethanolamine + CoA. The enzyme catalyses 1-hexadecanoyl-sn-glycero-3-phosphate + (9Z)-octadecenoyl-CoA = 1-hexadecanoyl-2-(9Z-octadecenoyl)-sn-glycero-3-phosphate + CoA. It carries out the reaction 1-octadecanoyl-sn-glycero-3-phosphate + (9Z)-octadecenoyl-CoA = 1-octadecanoyl-2-(9Z-octadecenoyl)-sn-glycero-3-phosphate + CoA. It catalyses the reaction 1-(9Z-octadecenoyl)-sn-glycero-3-phospho-L-serine + (9Z)-octadecenoyl-CoA = 1,2-di-(9Z)-octadecenoyl-sn-glycero-3-phospho-L-serine + CoA. The catalysed reaction is a 1-acyl-sn-glycero-3-phospho-(1D-myo-inositol) + (9Z)-octadecenoyl-CoA = a 1-acyl-2-(9Z-octadecenoyl)-sn-glycero-3-phospho-(1D-myo-inositol) + CoA. The enzyme catalyses 1-heptadecanoyl-sn-glycero-3-phosphate + (9Z)-octadecenoyl-CoA = 1-heptadecanoyl-2-(9Z)-octadecenoyl-sn-glycero-3-phosphate + CoA. It carries out the reaction 1-heptadecanoyl-sn-glycero-3-phosphate + dodecanoyl-CoA = 1-heptadecanoyl-2-dodecanoyl-sn-glycero-3-phosphate + CoA. It catalyses the reaction 1-heptadecanoyl-sn-glycero-3-phosphate + tetradecanoyl-CoA = 1-heptadecanoyl-2-tetradecanoyl-sn-glycero-3-phosphate + CoA. Its pathway is phospholipid metabolism; CDP-diacylglycerol biosynthesis; CDP-diacylglycerol from sn-glycerol 3-phosphate: step 2/3. Functionally, acyltransferase that catalyzes the sn-2-specific, acyl-CoA-dependent acylation of lysophosphatidic acid (LPA) to phosphatidic acid (PA) in lipid particles. Together with ALE1, plays a central role in PA biosynthesis. PA is the intermediate, from which all glycerophospholipids are synthesized. Can also acylate lysophosphoinositol (LPI) and lysophosphoserine (LPS). The fatty acyl substrates include 18:1-acyl-CoA, 14:0-acyl-CoA, 12:0-acyl-CoA and 10:0-acyl-CoA. The sequence is that of 1-acyl-sn-glycerol-3-phosphate acyltransferase from Saccharomyces cerevisiae (strain ATCC 204508 / S288c) (Baker's yeast).